The sequence spans 641 residues: Protein TIC 62, chloroplastic (641 aa).

A chloroplast-targeting transit peptide spans 1–63; it reads MEGTCFLRGQ…LSLRASGPIR (63 aa). Alanine 64 is modified (N-acetylalanine). An NADP(+)-binding site is contributed by 84-113; sequence VFVAGATGKVGSRTVRELLKLGFRVRAGVR. Residues 328–641 form a disordered region; it reads SKRPYVPPPK…SPLPSPVTNH (314 aa). Positions 359 to 372 are enriched in basic and acidic residues; it reads APKEDEAPPKEKNV. 2 consecutive repeat copies span residues 376–397 and 444–465. Positions 376–638 are 4 X 22 AA approximate repeats; it reads PLSPYASYED…PPTSPLPSPV (263 aa). Residues 393–402 show a composition bias toward low complexity; the sequence is IPNSTTSVSP. The segment covering 435–444 has biased composition (basic and acidic residues); that stretch reads KQVEEKKERP. Over residues 485–528 the composition is skewed to low complexity; the sequence is SSTVAKTVTETAVATSVTETSVATSVPETAVATSVTETAAPATS. Repeat unit 3 spans residues 532–553; sequence PLSPYAIYADLKPPTSPTPAST. The segment covering 599–612 has biased composition (polar residues); that stretch reads AIDTSLASGDNTAQ. The stretch at 617–638 is repeat 4; the sequence is PLSPYTMYADMKPPTSPLPSPV. Residues 630–641 are compositionally biased toward pro residues; sequence PTSPLPSPVTNH.

Part of the Tic complex. Interacts with TIC110 and TIC55. Interacts with LFNR1 and LFNR2. Component of high molecular weight thylakoid LFNRs-containing protein complexes containing LIR1, LFNR1, LFNR2, TIC62 and TROL proteins. Expressed in cotyledons and leaves, but not in roots.

Its subcellular location is the plastid. It is found in the chloroplast inner membrane. The protein localises to the chloroplast stroma. The protein resides in the chloroplast thylakoid. In terms of biological role, involved in protein precursor import into chloroplasts. Part of the redox regulon consisting of TIC32, TIC 55 and TIC62. Acts as a membrane anchor of LFNR1 and LFNR2. Has a NADPH-dependent dehydrogenase activity, but only after preincubation with lipids. In Arabidopsis thaliana (Mouse-ear cress), this protein is Protein TIC 62, chloroplastic.